Consider the following 446-residue polypeptide: Phosphoglucosamine mutase (446 aa).

The active-site Phosphoserine intermediate is the S99. Mg(2+)-binding residues include S99, D242, D244, and D246. S99 is modified (phosphoserine).

This sequence belongs to the phosphohexose mutase family. It depends on Mg(2+) as a cofactor. In terms of processing, activated by phosphorylation.

It carries out the reaction alpha-D-glucosamine 1-phosphate = D-glucosamine 6-phosphate. Catalyzes the conversion of glucosamine-6-phosphate to glucosamine-1-phosphate. This Campylobacter fetus subsp. fetus (strain 82-40) protein is Phosphoglucosamine mutase.